The primary structure comprises 467 residues: Venom prothrombin activator pseutarin-C catalytic subunit (467 aa).

Positions 1 to 22 are cleaved as a signal peptide; that stretch reads MAPQLLLCLILTFLWSLPEAES. A propeptide spanning residues 23 to 40 is cleaved from the precursor; it reads NVFLKSKVANRFLQRTKR. Positions 41–86 constitute a Gla domain; the sequence is ANSLVEEFKSGNIERECIEERCSKEEAREVFEDDEKTETFWNVYVD. A 4-carboxyglutamate mark is found at Glu-46, Glu-47, Glu-54, Glu-56, Glu-59, Glu-60, Glu-65, Glu-66, Glu-69, and Glu-72. Cys-57 and Cys-62 form a disulfide bridge. The EGF-like 1; calcium-binding domain occupies 86–122; that stretch reads DGDQCSSNPCHYRGICKDGIGSYTCTCLSGYEGKNCE. Cystine bridges form between Cys-90-Cys-101, Cys-95-Cys-110, Cys-112-Cys-121, Cys-129-Cys-140, Cys-136-Cys-149, Cys-151-Cys-164, Cys-172-Cys-329, Cys-216-Cys-221, Cys-236-Cys-252, Cys-377-Cys-391, and Cys-402-Cys-430. A glycan (O-linked (Hex...) serine) is linked at Ser-92. Positions 129-164 constitute an EGF-like 2 domain; sequence CRVDNGNCWHFCKSVQNDIQCSCAEGYLLGEDGHSC. Positions 182–209 are cleaved as a propeptide — activation peptide; that stretch reads REASLPDFVQSHNATLLKKSDNPSPDIR. Positions 210–454 constitute a Peptidase S1 domain; it reads IVNGMDCKLG…FIPWIKRIMR (245 aa). His-251 serves as the catalytic Charge relay system. Asn-254 is a glycosylation site (N-linked (GlcNAc...) asparagine). Residue Asp-309 is the Charge relay system of the active site. The active-site Charge relay system is Ser-406.

It belongs to the peptidase S1 family. Snake venom subfamily. As to quaternary structure, heterodimer of a light and a heavy chains; disulfide-linked. Is associated with pseutarin-C non-catalytic subunit (AC Q7SZN0) in a non-covalent manner. In terms of processing, gamma-carboxyglutamate residues are formed by vitamin K dependent carboxylation. These residues are essential for the binding of calcium. Expressed by the venom gland.

The protein resides in the secreted. The catalysed reaction is Selective cleavage of Arg-|-Thr and then Arg-|-Ile bonds in prothrombin to form thrombin.. With respect to regulation, activated by calcium and negatively charged phospholipids. Functionally, snake prothrombin activator that attacks the hemostatic system of prey. This non-catalytic subunit is functionally similar to blood coagulation factor V. It serves as a critical cofactor for the prothrombinase activity of the catalytic subunit, which is similar to the blood coagulation factor X. The complex converts prothrombin to thrombin by sequential cleavage at two positions, Arg-320 followed by Arg-271. Cleavage at Arg-320 produces an active intermediate known as meizothrombin. Meizothrombin is the 'second' substrate for prothrombinase, and it docks in an altered manner to present the second cleavage site (271). Cleavage at Arg-271 releases active thrombin from its pro-fragment. This order of events is reversed if the protease component of prothrombinase is used on its own, suggesting that the 271 site is inherently more accessible to proteolysis. The complex converts prothrombin to thrombin in presence but also in the absence of membrane. In Pseudonaja textilis (Eastern brown snake), this protein is Venom prothrombin activator pseutarin-C catalytic subunit.